The following is a 335-amino-acid chain: Nucleoid-associated protein Ent638_2782 (335 aa).

The protein belongs to the YejK family.

It is found in the cytoplasm. Its subcellular location is the nucleoid. The protein is Nucleoid-associated protein Ent638_2782 of Enterobacter sp. (strain 638).